The following is a 205-amino-acid chain: MSKRIQAKHKLDRRMGQNIWGRPKSPVNRREYGPGQHGQRRKGKMSDFGTQLRAKQKLKGYYGNITEKQFRRYYAEAIRLRGDSGENLVGLLERRLDAVVYRAKFVATPFAARQFVNHGHVKVNGVRVNIPSYQVKAGDLIEVKESSRQLEIVIVATQLSERDVPDYIEADHAKMTARVTRIPSLSEVPYPVQMEPNLVIEFYSR.

A compositionally biased stretch (basic residues) spans 1–12 (MSKRIQAKHKLD). Residues 1 to 49 (MSKRIQAKHKLDRRMGQNIWGRPKSPVNRREYGPGQHGQRRKGKMSDFG) form a disordered region. An S4 RNA-binding domain is found at 94–155 (RRLDAVVYRA…SSRQLEIVIV (62 aa)).

It belongs to the universal ribosomal protein uS4 family. In terms of assembly, part of the 30S ribosomal subunit. Contacts protein S5. The interaction surface between S4 and S5 is involved in control of translational fidelity.

Its function is as follows. One of the primary rRNA binding proteins, it binds directly to 16S rRNA where it nucleates assembly of the body of the 30S subunit. With S5 and S12 plays an important role in translational accuracy. In Methylobacterium radiotolerans (strain ATCC 27329 / DSM 1819 / JCM 2831 / NBRC 15690 / NCIMB 10815 / 0-1), this protein is Small ribosomal subunit protein uS4.